The chain runs to 340 residues: Ketol-acid reductoisomerase (NADP(+)) (340 aa).

The KARI N-terminal Rossmann domain maps to 1–182; the sequence is MRVYYDRDCD…GGGRSGIIET (182 aa). Residues 24–27, Arg48, Ser51, Ser53, and 83–86 each bind NADP(+); these read YGSQ and DELQ. Residue His108 is part of the active site. Gly134 contacts NADP(+). Residues 183 to 329 form the KARI C-terminal knotted domain; that stretch reads NFRQECETDL…EKLRGMMPWI (147 aa). Asp191, Glu195, Glu227, and Glu231 together coordinate Mg(2+). A substrate-binding site is contributed by Ser252.

Belongs to the ketol-acid reductoisomerase family. It depends on Mg(2+) as a cofactor.

It carries out the reaction (2R)-2,3-dihydroxy-3-methylbutanoate + NADP(+) = (2S)-2-acetolactate + NADPH + H(+). The catalysed reaction is (2R,3R)-2,3-dihydroxy-3-methylpentanoate + NADP(+) = (S)-2-ethyl-2-hydroxy-3-oxobutanoate + NADPH + H(+). The protein operates within amino-acid biosynthesis; L-isoleucine biosynthesis; L-isoleucine from 2-oxobutanoate: step 2/4. Its pathway is amino-acid biosynthesis; L-valine biosynthesis; L-valine from pyruvate: step 2/4. Involved in the biosynthesis of branched-chain amino acids (BCAA). Catalyzes an alkyl-migration followed by a ketol-acid reduction of (S)-2-acetolactate (S2AL) to yield (R)-2,3-dihydroxy-isovalerate. In the isomerase reaction, S2AL is rearranged via a Mg-dependent methyl migration to produce 3-hydroxy-3-methyl-2-ketobutyrate (HMKB). In the reductase reaction, this 2-ketoacid undergoes a metal-dependent reduction by NADPH to yield (R)-2,3-dihydroxy-isovalerate. This Cereibacter sphaeroides (strain ATCC 17029 / ATH 2.4.9) (Rhodobacter sphaeroides) protein is Ketol-acid reductoisomerase (NADP(+)).